The primary structure comprises 30 residues: Rothein 3.3 (30 aa).

The residue at position 30 (leucine 30) is a Leucine amide.

In terms of tissue distribution, expressed by the skin dorsal glands.

It localises to the secreted. Lacks antimicrobial activity. Does not inhibit the formation of NO by neuronal nitric oxide. The protein is Rothein 3.3 of Litoria rothii (Roth's tree frog).